The primary structure comprises 157 residues: Ubiquitin-like protein 4A (157 aa).

A Ubiquitin-like domain is found at 1-76 (MQLTVKALQG…LNLVVKPLEK (76 aa)). A Glycyl lysine isopeptide (Lys-Gly) (interchain with G-Cter in ubiquitin) cross-link involves residue K48. S90 carries the phosphoserine modification. Positions 96-138 (WQLISKVLARHFSVADASRVLEQLQRDYDRSLSRLTLDDIERL) are required and sufficient for interaction with BAG6.

Component of the BAG6/BAT3 complex, at least composed of BAG6, UBL4A and GET4/TRC35. Interacts with BAG6; the interaction is direct and required for UBL4A protein stability. Interacts with USP13; may be indirect via BAG6. Post-translationally, polyubiquitinated. Ubiquitination by AMFR and deubiquitination by USP13 may regulate the interaction between the BAG6/BAT3 complex and SGTA and therefore may regulate client proteins fate.

It is found in the cytoplasm. Its subcellular location is the cytosol. It localises to the nucleus. Its function is as follows. As part of a cytosolic protein quality control complex, the BAG6/BAT3 complex, maintains misfolded and hydrophobic patches-containing proteins in a soluble state and participates in their proper delivery to the endoplasmic reticulum or alternatively can promote their sorting to the proteasome where they undergo degradation. The BAG6/BAT3 complex is involved in the post-translational delivery of tail-anchored/type II transmembrane proteins to the endoplasmic reticulum membrane. Recruited to ribosomes, it interacts with the transmembrane region of newly synthesized tail-anchored proteins and together with SGTA and ASNA1 mediates their delivery to the endoplasmic reticulum. Client proteins that cannot be properly delivered to the endoplasmic reticulum are ubiquitinated and sorted to the proteasome. Similarly, the BAG6/BAT3 complex also functions as a sorting platform for proteins of the secretory pathway that are mislocalized to the cytosol either delivering them to the proteasome for degradation or to the endoplasmic reticulum. The BAG6/BAT3 complex also plays a role in the endoplasmic reticulum-associated degradation (ERAD), a quality control mechanism that eliminates unwanted proteins of the endoplasmic reticulum through their retrotranslocation to the cytosol and their targeting to the proteasome. It maintains these retrotranslocated proteins in an unfolded yet soluble state condition in the cytosol to ensure their proper delivery to the proteasome. The protein is Ubiquitin-like protein 4A of Mus musculus (Mouse).